A 383-amino-acid polypeptide reads, in one-letter code: Transcription termination factor Rho (383 aa).

The segment at 1 to 22 (MTIETTTKKRPRAARPPRPRES) is disordered. Positions 8–17 (KKRPRAARPP) are enriched in basic residues. A Rho RNA-BD domain is found at 26–93 (LETVAGLLDV…AEVESVNGST (68 aa)). ATP-binding positions include 132-137 (GKGQRG), 144-149 (KAGKTM), and R175.

Belongs to the Rho family. As to quaternary structure, homohexamer. The homohexamer assembles into an open ring structure.

Functionally, facilitates transcription termination by a mechanism that involves Rho binding to the nascent RNA, activation of Rho's RNA-dependent ATPase activity, and release of the mRNA from the DNA template. The chain is Transcription termination factor Rho from Streptosporangium roseum (strain ATCC 12428 / DSM 43021 / JCM 3005 / KCTC 9067 / NCIMB 10171 / NRRL 2505 / NI 9100).